The primary structure comprises 46 residues: Iota-conotoxin RXIA (46 aa).

4-hydroxyproline; partial occurs at positions 2 and 11. 4 disulfide bridges follow: Cys5-Cys19, Cys12-Cys22, Cys18-Cys27, and Cys21-Cys38. Pro29 bears the 4-hydroxyproline mark. Phe44 is modified (D-phenylalanine).

This sequence belongs to the conotoxin I1 superfamily. Post-translationally, the natural D-Phe-44 form of the peptide is more potent than the L-Phe-44 form. Expressed by the venom duct.

It is found in the secreted. Functionally, iota-conotoxins bind to voltage-gated sodium channels and act as agonists by shifting the voltage-dependence of activation to more hyperpolarized levels. This toxin acts on Nav1.6/SCN8A &gt; Nav1.2/SCN2A &gt; Nav1.7/SCN9A sodium channels. Produces general excitatory symptoms upon intracorporeal injection and repetitive action potentials in the frog cutaneous pectoris muscle. Natural peptide (with D-Phe) is active on nerve, but not on muscle. Synthetic peptide (with L-Phe) is not active on both nerve and muscle. This chain is Iota-conotoxin RXIA, found in Conus radiatus (Rayed cone).